Here is a 155-residue protein sequence, read N- to C-terminus: Ribonuclease H (155 aa).

Residues 1 to 142 enclose the RNase H type-1 domain; sequence MLKQVEIFTD…CDELARAAAM (142 aa). Residues Asp-10, Glu-48, Asp-70, and Asp-134 each coordinate Mg(2+).

This sequence belongs to the RNase H family. As to quaternary structure, monomer. It depends on Mg(2+) as a cofactor.

It is found in the cytoplasm. It catalyses the reaction Endonucleolytic cleavage to 5'-phosphomonoester.. Its function is as follows. Endonuclease that specifically degrades the RNA of RNA-DNA hybrids. The sequence is that of Ribonuclease H from Escherichia coli (strain 55989 / EAEC).